We begin with the raw amino-acid sequence, 86 residues long: MKMAKSANEIGFITCLVVFLVLTGQSNGMSNGMPRTVPCIEGRILWNRTLPCSSILCGDHCVPHGYRAGTCDIVNDRAICKCSRCR.

A signal peptide spans 1-28; the sequence is MKMAKSANEIGFITCLVVFLVLTGQSNG. 4 cysteine pairs are disulfide-bonded: C39–C85, C52–C71, C57–C80, and C61–C82.

It belongs to the DEFL family.

Its subcellular location is the secreted. The polypeptide is Putative defensin-like protein 189 (Arabidopsis thaliana (Mouse-ear cress)).